The following is a 227-amino-acid chain: Isopentenyl-diphosphate Delta-isomerase 1 (227 aa).

Lys-36 serves as a coordination point for substrate. Mg(2+)-binding residues include His-40 and His-51. Residues 49 to 199 (LLHRAFSVFL…EIKITPWFQI (151 aa)) form the Nudix hydrolase domain. Residues Arg-70 and Lys-74 each contribute to the substrate site. The active-site Proton acceptor is the Cys-86. Ser-87 is a binding site for substrate. Residues Glu-146 and Glu-148 each coordinate Mg(2+). Residue Glu-148 is part of the active site. Position 176 is an N6-acetyllysine (Lys-176).

Belongs to the IPP isomerase type 1 family. In terms of assembly, monomer. Requires Mg(2+) as cofactor.

It is found in the peroxisome. It carries out the reaction isopentenyl diphosphate = dimethylallyl diphosphate. Its pathway is isoprenoid biosynthesis; dimethylallyl diphosphate biosynthesis; dimethylallyl diphosphate from isopentenyl diphosphate: step 1/1. Catalyzes the 1,3-allylic rearrangement of the homoallylic substrate isopentenyl (IPP) to its highly electrophilic allylic isomer, dimethylallyl diphosphate (DMAPP). The chain is Isopentenyl-diphosphate Delta-isomerase 1 (IDI1) from Bos taurus (Bovine).